Consider the following 154-residue polypeptide: SsrA-binding protein (154 aa).

Belongs to the SmpB family.

The protein localises to the cytoplasm. Its function is as follows. Required for rescue of stalled ribosomes mediated by trans-translation. Binds to transfer-messenger RNA (tmRNA), required for stable association of tmRNA with ribosomes. tmRNA and SmpB together mimic tRNA shape, replacing the anticodon stem-loop with SmpB. tmRNA is encoded by the ssrA gene; the 2 termini fold to resemble tRNA(Ala) and it encodes a 'tag peptide', a short internal open reading frame. During trans-translation Ala-aminoacylated tmRNA acts like a tRNA, entering the A-site of stalled ribosomes, displacing the stalled mRNA. The ribosome then switches to translate the ORF on the tmRNA; the nascent peptide is terminated with the 'tag peptide' encoded by the tmRNA and targeted for degradation. The ribosome is freed to recommence translation, which seems to be the essential function of trans-translation. The sequence is that of SsrA-binding protein from Enterococcus faecalis (strain ATCC 700802 / V583).